Here is a 654-residue protein sequence, read N- to C-terminus: Endoplasmic reticulum chaperone BiP (654 aa).

The signal sequence occupies residues 1–18 (MKLSLVAAMLLLLSAARA). The segment at 1–80 (MKLSLVAAML…EGERLIGDAA (80 aa)) is required for interaction with ELAPOR1. 36–39 (GTTY) contacts ATP. A Phosphoserine modification is found at Ser86. Lys96 is an ATP binding site. At Lys125 the chain carries N6-acetyllysine. The segment at 125 to 280 (KPYIQVDIGG…KKKTGKDVRK (156 aa)) is nucleotide-binding (NBD). Position 160 is a 3'-nitrotyrosine (Tyr160). Position 213 is an N6-acetyllysine (Lys213). 227–229 (GGT) contacts ATP. Lys271 is subject to N6-acetyllysine. 293-300 (EKAKRALS) lines the ATP pocket. Lys326 is modified (N6-acetyllysine). Residue Lys352 forms a Glycyl lysine isopeptide (Lys-Gly) (interchain with G-Cter in SUMO2) linkage. Lys353 carries the N6-acetyllysine; alternate modification. Lys353 is covalently cross-linked (Glycyl lysine isopeptide (Lys-Gly) (interchain with G-Cter in SUMO1); alternate). An ATP-binding site is contributed by 364 to 367 (GSTR). Residues 409–419 (QDTGDLVLLDV) are interdomain linker. The segment at 420 to 500 (CPLTLGIETV…PRGVPQIEVT (81 aa)) is substrate-binding (SBD). Lys447 carries the N6-succinyllysine modification. The residue at position 492 (Arg492) is an Omega-N-methylarginine. Position 518 is an O-AMP-threonine; alternate (Thr518). Thr518 is modified (phosphothreonine; alternate). Lys585 is subject to N6,N6,N6-trimethyllysine; by METTL21A; in vitro. At Lys585 the chain carries N6,N6-dimethyllysine; alternate. Lys585 carries the N6-methyllysine; alternate modification. Position 591 is an N6-methyllysine (Lys591). The disordered stretch occupies residues 633–654 (KLYGSAGPPPTGEEDTAEKDEL). A phosphothreonine mark is found at Thr643 and Thr648. Residues 644 to 654 (GEEDTAEKDEL) are compositionally biased toward acidic residues. The Prevents secretion from ER motif lies at 651 to 654 (KDEL).

This sequence belongs to the heat shock protein 70 family. Monomer and homooligomer; homooligomerization via the interdomain linker inactivates the chaperone activity and acts as a storage of HSPA5/BiP molecules. Interacts with DNAJC1 (via J domain). Component of an EIF2 complex at least composed of CELF1/CUGBP1, CALR, CALR3, EIF2S1, EIF2S2, HSP90B1 and HSPA5. Part of a large chaperone multiprotein complex comprising DNAJB11, HSP90B1, HSPA5, HYOU, PDIA2, PDIA4, PDIA6, PPIB, SDF2L1, UGGT1 and very small amounts of ERP29, but not, or at very low levels, CALR nor CANX. Interacts with TMEM132A and TRIM21. May form a complex with ERLEC1, OS9, SEL1L and SYVN1. Interacts with DNAJC10. Interacts with DNAJB9/ERdj4; leading to recruit HSPA5/BiP to ERN1/IRE1. Interacts with ERN1/IRE1 (via luminal domain); the interaction takes place following interaction with DNAJB9/ERdj4 and leads to inactivate ERN1/IRE1, the interaction also competitively inhibits ERN1 interaction with MANF. Interacts directly with MANF (via SAP domain); the interaction inhibits ATP binding to HSPA5/BiP and subsequent nucleotide exchange. Interacts with EIF2AK3/PERK (via luminal domain); interaction leads to inactivate EIF2AK3/PERK. Interacts with MX1. Interacts with METTL23. Interacts with CEMIP; the interaction induces calcium leakage from the endoplasmic reticulum and cell migration. Interacts with PCSK4 form; the interaction takes place in the endoplasmic reticulum. Interacts with CIPC. Interacts with CCDC88B (via C-terminus); the interaction opposes ERN1-mediated JNK activation, protecting against apoptosis. Interacts with INPP5K; necessary for INPP5K localization at the endoplasmic reticulum. Interacts with MANF; the interaction is direct. Interacts with LOXL2; leading to activate the ERN1/IRE1-XBP1 pathway of the unfolded protein response. Interacts with CLU under stressed condition; interaction increases CLU protein stability; facilitates its retrotranslocation and redistribution to the mitochondria; cooperatively suppress stress-induced apoptosis by stabilizing mitochondrial membrane integrity. Interacts with CCDC47. Interacts with CLN3. Interacts with ELAPOR1; may regulate the function of HSPA5 in apoptosis and cell proliferation. Interacts with CASP7. Interacts with ILDR2; the interaction stabilizes ILDR2 expression. Interacts with ADAM7. As to quaternary structure, (Microbial infection) Interacts with Japanese encephalitis virus envelope protein E. In terms of assembly, (Microbial infection) Interacts with R.delemar invasin CotH3 on the surface of nasal epithelial cells. Interacts with R.delemar invasin CotH2. (Microbial infection) Interacts with Zika virus envelope protein E and non-structural protein 1 in a chaperone-client manner. In terms of processing, AMPylated by FICD. In unstressed cells, AMPylation at Thr-518 by FICD inactivates the chaperome activity: AMPylated form is locked in a relatively inert state and only weakly stimulated by J domain-containing proteins. In response to endoplasmic reticulum stress, de-AMPylation by the same protein, FICD, restores the chaperone activity.

The protein localises to the endoplasmic reticulum lumen. The protein resides in the melanosome. It is found in the cytoplasm. It localises to the cell surface. The enzyme catalyses ATP + H2O = ADP + phosphate + H(+). The chaperone activity is regulated by ATP-induced allosteric coupling of the nucleotide-binding (NBD) and substrate-binding (SBD) domains. In the ADP-bound and nucleotide-free (apo) states, the two domains have little interaction. In contrast, in the ATP-bound state the two domains are tightly coupled, which results in drastically accelerated kinetics in both binding and release of polypeptide substrates. J domain-containing co-chaperones (DNAJB9/ERdj4 or DNAJC10/ERdj5) stimulate the ATPase activity and are required for efficient substrate recognition by HSPA5/BiP. Homooligomerization inactivates participating HSPA5/BiP protomers and probably act as reservoirs to store HSPA5/BiP molecules when they are not needed by the cell. Endoplasmic reticulum chaperone that plays a key role in protein folding and quality control in the endoplasmic reticulum lumen. Involved in the correct folding of proteins and degradation of misfolded proteins via its interaction with DNAJC10/ERdj5, probably to facilitate the release of DNAJC10/ERdj5 from its substrate. Acts as a key repressor of the EIF2AK3/PERK and ERN1/IRE1-mediated unfolded protein response (UPR). In the unstressed endoplasmic reticulum, recruited by DNAJB9/ERdj4 to the luminal region of ERN1/IRE1, leading to disrupt the dimerization of ERN1/IRE1, thereby inactivating ERN1/IRE1. Also binds and inactivates EIF2AK3/PERK in unstressed cells. Accumulation of misfolded protein in the endoplasmic reticulum causes release of HSPA5/BiP from ERN1/IRE1 and EIF2AK3/PERK, allowing their homodimerization and subsequent activation. Plays an auxiliary role in post-translational transport of small presecretory proteins across endoplasmic reticulum (ER). May function as an allosteric modulator for SEC61 channel-forming translocon complex, likely cooperating with SEC62 to enable the productive insertion of these precursors into SEC61 channel. Appears to specifically regulate translocation of precursors having inhibitory residues in their mature region that weaken channel gating. May also play a role in apoptosis and cell proliferation. In terms of biological role, (Microbial infection) Plays an important role in viral binding to the host cell membrane and entry for several flaviruses such as Dengue virus, Zika virus and Japanese encephalitis virus. Acts as a component of the cellular receptor for Dengue virus serotype 2/DENV-2 on human liver cells. Its function is as follows. (Microbial infection) Acts as a receptor for CotH proteins expressed by fungi of the order mucorales, the causative agent of mucormycosis, which plays an important role in epithelial cell invasion by the fungi. Acts as a receptor for R.delemar CotH3 in nasal epithelial cells, which may be an early step in rhinoorbital/cerebral mucormycosis (RCM) disease progression. This is Endoplasmic reticulum chaperone BiP from Homo sapiens (Human).